The following is a 253-amino-acid chain: Small ribosomal subunit protein uS3 (253 aa).

The KH type-2 domain occupies 21–92; that stretch reads LNEFLTRELA…SVELYAEKVA (72 aa). The disordered stretch occupies residues 211 to 253; it reads VEPKDEILPTTPISEQKGGKPDPQVPQQPPQQPPAMPPPVPTA. Pro residues predominate over residues 233–253; sequence PQVPQQPPQQPPAMPPPVPTA.

This sequence belongs to the universal ribosomal protein uS3 family.

Its subcellular location is the cytoplasm. It localises to the nucleus. It is found in the nucleolus. The protein resides in the mitochondrion inner membrane. The protein localises to the cytoskeleton. Its subcellular location is the spindle. The enzyme catalyses 2'-deoxyribonucleotide-(2'-deoxyribose 5'-phosphate)-2'-deoxyribonucleotide-DNA = a 3'-end 2'-deoxyribonucleotide-(2,3-dehydro-2,3-deoxyribose 5'-phosphate)-DNA + a 5'-end 5'-phospho-2'-deoxyribonucleoside-DNA + H(+). Its function is as follows. Component of the small ribosomal subunit. The ribosome is a large ribonucleoprotein complex responsible for the synthesis of proteins in the cell. Has endonuclease activity and plays a role in repair of damaged DNA. Also involved in other processes including regulation of transcription, translation of its cognate mRNA, spindle formation and chromosome movement during mitosis, and apoptosis. This Ambystoma mexicanum (Axolotl) protein is Small ribosomal subunit protein uS3 (RPS3).